Reading from the N-terminus, the 167-residue chain is Small ribosomal subunit protein uS7c (167 aa).

It belongs to the universal ribosomal protein uS7 family. Part of the 30S ribosomal subunit.

Its subcellular location is the plastid. It is found in the chloroplast. One of the primary rRNA binding proteins, it binds directly to 16S rRNA where it nucleates assembly of the head domain of the 30S subunit. The polypeptide is Small ribosomal subunit protein uS7c (rps7) (Tetradesmus obliquus (Green alga)).